Here is a 220-residue protein sequence, read N- to C-terminus: 7-cyano-7-deazaguanine synthase (220 aa).

ATP is bound at residue 10–20; it reads FSGGQDSTTCL. Zn(2+) is bound by residues C188, C197, C200, and C203.

Belongs to the QueC family. Requires Zn(2+) as cofactor.

It carries out the reaction 7-carboxy-7-deazaguanine + NH4(+) + ATP = 7-cyano-7-deazaguanine + ADP + phosphate + H2O + H(+). The protein operates within purine metabolism; 7-cyano-7-deazaguanine biosynthesis. Its function is as follows. Catalyzes the ATP-dependent conversion of 7-carboxy-7-deazaguanine (CDG) to 7-cyano-7-deazaguanine (preQ(0)). The polypeptide is 7-cyano-7-deazaguanine synthase (Neisseria meningitidis serogroup C (strain 053442)).